An 87-amino-acid chain; its full sequence is UPF0175 protein AF_0597 (87 aa).

This sequence belongs to the UPF0175 family.

The sequence is that of UPF0175 protein AF_0597 from Archaeoglobus fulgidus (strain ATCC 49558 / DSM 4304 / JCM 9628 / NBRC 100126 / VC-16).